The following is a 2353-amino-acid chain: Otogelin-like protein (2353 aa).

An N-terminal signal peptide occupies residues 1-31 (MNIVRKLNLMIPWSIFLLHVLLFSLQEYICA). A VWFD 1 domain is found at 121 to 297 (GICKTWGQYH…VQTPDDTKCV (177 aa)). Cystine bridges form between Cys123-Cys257 and Cys145-Cys296. The N-linked (GlcNAc...) asparagine glycan is linked to Asn144. The region spanning 390-443 (CDDSFVHRDCISCCPPTCTFEKQCLGSNLHCLDGCYCPDGLVMDNGTCISLENC) is the TIL 1 domain. Residues Asn434 and Asn473 are each glycosylated (N-linked (GlcNAc...) asparagine). Residues 481–654 (VQCSVVGDSH…NAWRVSSTCF (174 aa)) form the VWFD 2 domain. 3 cysteine pairs are disulfide-bonded: Cys483-Cys618, Cys505-Cys653, and Cys527-Cys535. A TIL 2 domain is found at 745–800 (CQKGMLYHHCSSFCLHSCISLSSPEQCSDDCAEGCNCPEGKFYEDTLNFCVPIFHC). Residues Asn826 and Asn876 are each glycosylated (N-linked (GlcNAc...) asparagine). The VWFD 3 domain occupies 946 to 1115 (AVCTIYGDRH…SWALGQCESP (170 aa)). Intrachain disulfides connect Cys948-Cys1078 and Cys992-Cys999. Asn1289, Asn1604, and Asn2198 each carry an N-linked (GlcNAc...) asparagine glycan. One can recognise a VWFD 4 domain in the interval 1534-1723 (CRCSMLSELS…SWEIEKSFEV (190 aa)). A disulfide bridge links Cys1536 with Cys1683. 4 disulfides stabilise this stretch: Cys2261/Cys2317, Cys2282/Cys2331, Cys2293/Cys2348, and Cys2297/Cys2350. A CTCK domain is found at 2261 to 2353 (CKREERICQK…EPIDCTCQWN (93 aa)).

Belongs to the otogelin family. In terms of tissue distribution, expressed at high levels in fetal inner ear and heart. Low levels in fetal skeletal muscle, kidney, spleen and colon. Not detected in fetal liver, lung, brain, nor in fetal stomach. In adult tissues, highest levels in brain, kidney, heart and retina. Relatively low levels in lung, spleen and duodenum. Not detected in adult skeletal muscle, liver, nor testis.

It localises to the secreted. The sequence is that of Otogelin-like protein (OTOGL) from Homo sapiens (Human).